A 235-amino-acid chain; its full sequence is 2-C-methyl-D-erythritol 4-phosphate cytidylyltransferase (235 aa).

This sequence belongs to the IspD/TarI cytidylyltransferase family. IspD subfamily. As to quaternary structure, homodimer.

It catalyses the reaction 2-C-methyl-D-erythritol 4-phosphate + CTP + H(+) = 4-CDP-2-C-methyl-D-erythritol + diphosphate. It participates in isoprenoid biosynthesis; isopentenyl diphosphate biosynthesis via DXP pathway; isopentenyl diphosphate from 1-deoxy-D-xylulose 5-phosphate: step 2/6. Its function is as follows. Catalyzes the formation of 4-diphosphocytidyl-2-C-methyl-D-erythritol from CTP and 2-C-methyl-D-erythritol 4-phosphate (MEP). The sequence is that of 2-C-methyl-D-erythritol 4-phosphate cytidylyltransferase from Blochmanniella pennsylvanica (strain BPEN).